The primary structure comprises 1056 residues: Sucrose-phosphate synthase (1056 aa).

Over residues 112 to 123 the composition is skewed to basic and acidic residues; sequence HVERERGRREAT. The interval 112–132 is disordered; sequence HVERERGRREATADMSEDLSE. Residues S158 and S424 each carry the phosphoserine modification. Positions 681–700 are disordered; the sequence is NWQRIDEGSENSDTDSAGDS.

This sequence belongs to the glycosyltransferase 1 family. As to quaternary structure, homodimer or homotetramer. Post-translationally, phosphorylated at Ser-158 and Ser-424.

The catalysed reaction is beta-D-fructose 6-phosphate + UDP-alpha-D-glucose = sucrose 6(F)-phosphate + UDP + H(+). It participates in glycan biosynthesis; sucrose biosynthesis; sucrose from D-fructose 6-phosphate and UDP-alpha-D-glucose: step 1/2. Its activity is regulated as follows. Activity is regulated by phosphorylation and moderated by concentration of metabolites and light. Plays a role in photosynthetic sucrose synthesis by catalyzing the rate-limiting step of sucrose biosynthesis from UDP-glucose and fructose- 6-phosphate. Involved in the regulation of carbon partitioning in the leaves of plants. May regulate the synthesis of sucrose and therefore play a major role as a limiting factor in the export of photoassimilates out of the leaf. Plays a role for sucrose availability that is essential for plant growth and fiber elongation. In Spinacia oleracea (Spinach), this protein is Sucrose-phosphate synthase (SPS1).